The primary structure comprises 132 residues: Small ribosomal subunit protein uS8 (132 aa).

This sequence belongs to the universal ribosomal protein uS8 family. In terms of assembly, part of the 30S ribosomal subunit. Contacts proteins S5 and S12.

One of the primary rRNA binding proteins, it binds directly to 16S rRNA central domain where it helps coordinate assembly of the platform of the 30S subunit. The polypeptide is Small ribosomal subunit protein uS8 (Mycoplasmopsis synoviae (strain 53) (Mycoplasma synoviae)).